The primary structure comprises 1404 residues: DNA-directed RNA polymerase subunit beta' (1404 aa).

Zn(2+) is bound by residues cysteine 72, cysteine 74, cysteine 87, and cysteine 90. Residues aspartate 462, aspartate 464, and aspartate 466 each contribute to the Mg(2+) site. Positions 816, 890, 897, and 900 each coordinate Zn(2+).

The protein belongs to the RNA polymerase beta' chain family. The RNAP catalytic core consists of 2 alpha, 1 beta, 1 beta' and 1 omega subunit. When a sigma factor is associated with the core the holoenzyme is formed, which can initiate transcription. Requires Mg(2+) as cofactor. It depends on Zn(2+) as a cofactor.

It catalyses the reaction RNA(n) + a ribonucleoside 5'-triphosphate = RNA(n+1) + diphosphate. DNA-dependent RNA polymerase catalyzes the transcription of DNA into RNA using the four ribonucleoside triphosphates as substrates. In Azoarcus sp. (strain BH72), this protein is DNA-directed RNA polymerase subunit beta'.